We begin with the raw amino-acid sequence, 265 residues long: Ubiquinone biosynthesis protein COQ4 homolog, mitochondrial (265 aa).

The transit peptide at 1–30 (MMQRSWQSWRRGLTLGLASRRSYVASVEAP) directs the protein to the mitochondrion. Positions 170, 171, 174, and 186 each coordinate Zn(2+).

Belongs to the COQ4 family. Component of a multi-subunit COQ enzyme complex. It depends on Zn(2+) as a cofactor.

Its subcellular location is the mitochondrion inner membrane. It carries out the reaction a 4-hydroxy-3-methoxy-5-(all-trans-polyprenyl)benzoate + H(+) = a 2-methoxy-6-(all-trans-polyprenyl)phenol + CO2. Its pathway is cofactor biosynthesis; ubiquinone biosynthesis. In terms of biological role, lyase that catalyzes the C1-decarboxylation of 4-hydroxy-3-methoxy-5-(all-trans-polyprenyl)benzoic acid into 2-methoxy-6-(all-trans-polyprenyl)phenol during ubiquinone biosynthesis. The sequence is that of Ubiquinone biosynthesis protein COQ4 homolog, mitochondrial from Drosophila virilis (Fruit fly).